The sequence spans 487 residues: 2-aminomuconic semialdehyde dehydrogenase (487 aa).

Position 231–236 (231–236 (GSQPTA)) interacts with NAD(+). Glu-253 serves as the catalytic Proton acceptor. Cys-287 acts as the Nucleophile in catalysis. At Ser-362 the chain carries Phosphoserine.

This sequence belongs to the aldehyde dehydrogenase family. As to expression, detected in hepatocytes and in proximal and distal convoluted tubules in kidney cortex (at protein level). Highly expressed in adult liver and in kidney cortex. First detected in embryonic liver after 15 days of development.

It localises to the cytoplasm. It carries out the reaction 2-aminomuconate 6-semialdehyde + NAD(+) + H2O = (2Z,4E)-2-aminomuconate + NADH + 2 H(+). The protein operates within amino-acid degradation; L-kynurenine degradation. Functionally, catalyzes the NAD-dependent oxidation of 2-aminomuconic semialdehyde of the kynurenine metabolic pathway in L-tryptophan degradation. The polypeptide is 2-aminomuconic semialdehyde dehydrogenase (Aldh8a1) (Mus musculus (Mouse)).